A 329-amino-acid chain; its full sequence is Centromere protein L (329 aa).

2 positions are modified to phosphoserine: Ser-40 and Ser-54.

Belongs to the CENP-L/IML3 family. In terms of assembly, component of the CENPA-CAD complex, composed of CENPI, CENPK, CENPL, CENPO, CENPP, CENPQ, CENPR and CENPS. The CENPA-CAD complex interacts with the CENPA-NAC complex, at least composed of CENPA, CENPC, CENPH, CENPM, CENPN, CENPT and CENPU.

The protein localises to the nucleus. Its subcellular location is the chromosome. The protein resides in the centromere. Functionally, component of the CENPA-CAD (nucleosome distal) complex, a complex recruited to centromeres which is involved in assembly of kinetochore proteins, mitotic progression and chromosome segregation. May be involved in incorporation of newly synthesized CENPA into centromeres via its interaction with the CENPA-NAC complex. The polypeptide is Centromere protein L (Cenpl) (Mus musculus (Mouse)).